The chain runs to 438 residues: Aspartate--tRNA(Asp) ligase (438 aa).

Glu-170 contacts L-aspartate. The tract at residues 192–195 is aspartate; the sequence is QLYK. Arg-214 contributes to the L-aspartate binding site. Residues 214–216, 222–224, and Glu-361 contribute to the ATP site; these read RAE and RHL. The Mg(2+) site is built by Glu-361 and Ser-364. L-aspartate contacts are provided by Ser-364 and Arg-368. 409 to 412 is a binding site for ATP; it reads GAER.

It belongs to the class-II aminoacyl-tRNA synthetase family. Type 2 subfamily. Homodimer. Requires Mg(2+) as cofactor.

The protein localises to the cytoplasm. It catalyses the reaction tRNA(Asp) + L-aspartate + ATP = L-aspartyl-tRNA(Asp) + AMP + diphosphate. Functionally, catalyzes the attachment of L-aspartate to tRNA(Asp) in a two-step reaction: L-aspartate is first activated by ATP to form Asp-AMP and then transferred to the acceptor end of tRNA(Asp). In Pyrococcus horikoshii (strain ATCC 700860 / DSM 12428 / JCM 9974 / NBRC 100139 / OT-3), this protein is Aspartate--tRNA(Asp) ligase.